A 1836-amino-acid polypeptide reads, in one-letter code: InaD-like protein (1836 aa).

An L27 domain is found at 1–65 (MPENPAAEKM…SIKQLKGQLS (65 aa)). 3 consecutive PDZ domains span residues 134–221 (YIDI…AREV), 248–328 (DVEL…ARDP), and 365–453 (NVEL…VRRK). Residues S455, S459, and S482 each carry the phosphoserine modification. The span at 456–466 (LSASPFEQPSS) shows a compositional bias: polar residues. The tract at residues 456–492 (LSASPFEQPSSREAVAEPPEVPELTGSLKPETNSRME) is disordered. The region spanning 555–641 (DEELQKYSKL…PFTLVCCRRL (87 aa)) is the PDZ 4 domain. S647 carries the phosphoserine modification. PDZ domains are found at residues 687-773 (TVEL…ICKP) and 1074-1166 (PRIV…VVQS). The segment covering 1173 to 1191 (VIPSVNNKGKTPPQNQDQN) has biased composition (polar residues). The interval 1173–1232 (VIPSVNNKGKTPPQNQDQNTQEKKAKRHGTAPPPMKLPPPYRAPSADTEESEEDSALTDK) is disordered. The segment covering 1203-1214 (APPPMKLPPPYR) has biased composition (pro residues). S1217 carries the phosphoserine modification. A compositionally biased stretch (acidic residues) spans 1219–1228 (DTEESEEDSA). Residues 1245–1328 (LHIIELEKDK…PTRVKLVFIR (84 aa)) form the PDZ 7 domain. Residues 1341-1448 (FPVPSHSPSP…ADVTGSGNFQ (108 aa)) form a disordered region. Over residues 1372 to 1383 (PLPERESSKPED) the composition is skewed to basic and acidic residues. Composition is skewed to polar residues over residues 1415–1426 (YSAQVSSSSQEI) and 1434–1448 (CQST…GNFQ). 2 PDZ domains span residues 1472 to 1555 (EMII…VIYR) and 1568 to 1650 (VFLV…EIGR). At T1545 the chain carries Phosphothreonine. The disordered stretch occupies residues 1657-1678 (ASSRKTSQNSQGDQHSAHSSCR). Residues 1709-1795 (PRTVEIIREL…FGRIILQVVA (87 aa)) enclose the PDZ 10 domain. A disordered region spans residues 1813-1836 (SQLGSPTADRHPQDPEELLQRTAD).

As to quaternary structure, forms a ternary complex with PALS1 and CRB1. Component of a complex whose core is composed of ARHGAP17, AMOT, PALS1, INADL/PATJ and PARD3/PAR3. Forms a heterotrimeric complex composed of MMP5, LIN7B and PATJ; the N-terminal L27 domain of PALS1 interacts with the L27 domain of PATJ and the C-terminal L27 domain of PALS1 interacts with the L27 domain of LIN7B. Component of a complex composed of CRB3, PALS1 and PATJ. As part of the Crumbs complex; interacts with WWP1, the interaction is enhanced by AMOTL2 and facilitates WWP1 localization to the plasma membrane. The Crumbs complex promotes monoubiquitination of AMOTL2 by WWP1, which activates the Hippo signaling pathway. Interacts (via N-terminus) with PALS1/PALS (via PDZ domain). Interacts with TJP3/ZO-3 and CLDN1/claudin-1. Interacts with ASIC3, KCNJ10, KCNJ15, GRIN2A, GRIN2B, GRIN2C, GRIN2D, NLGN2, and HTR2A. Interacts with MPP7. Directly interacts with HTR4. Interacts (via PDZ domain 8) with WWC1 (via the ADDV motif). Interacts with SLC6A4. Interacts (via C-terminus) with ARHGEF18. Interacts with NPHP1. Interacts with PARD3/PAR3. Interacts (via PDZ1-6 domains) with TJP1/ZO1; the interaction is required for attachment and extension of TJP1/ZO1 condensates along the apical cell interface. Abundantly expressed in germ cells, also expressed in testes and seminiferous tubules, with faint expression in Sertoli cells (at protein level).

The protein localises to the cell junction. The protein resides in the tight junction. It is found in the apical cell membrane. It localises to the cytoplasm. Its subcellular location is the perinuclear region. Its function is as follows. Scaffolding protein that facilitates the localization of proteins to the cell membrane. Required for the correct formation of tight junctions and epithelial apico-basal polarity. Acts (via its L27 domain) as an apical connector and elongation factor for multistranded TJP1/ZO1 condensates that form a tight junction belt, thereby required for the formation of the tight junction-mediated cell barrier. Positively regulates epithelial cell microtubule elongation and cell migration, possibly via facilitating localization of PRKCI/aPKC and PAR3D/PAR3 at the leading edge of migrating cells. Plays a role in the correct reorientation of the microtubule-organizing center during epithelial migration. May regulate the surface expression and/or function of ASIC3 in sensory neurons. May recruit ARHGEF18 to apical cell-cell boundaries. The polypeptide is InaD-like protein (Rattus norvegicus (Rat)).